Here is a 350-residue protein sequence, read N- to C-terminus: S-adenosylmethionine:tRNA ribosyltransferase-isomerase (350 aa).

It belongs to the QueA family. As to quaternary structure, monomer.

The protein localises to the cytoplasm. The enzyme catalyses 7-aminomethyl-7-carbaguanosine(34) in tRNA + S-adenosyl-L-methionine = epoxyqueuosine(34) in tRNA + adenine + L-methionine + 2 H(+). Its pathway is tRNA modification; tRNA-queuosine biosynthesis. Functionally, transfers and isomerizes the ribose moiety from AdoMet to the 7-aminomethyl group of 7-deazaguanine (preQ1-tRNA) to give epoxyqueuosine (oQ-tRNA). The chain is S-adenosylmethionine:tRNA ribosyltransferase-isomerase from Bacillus cereus (strain 03BB102).